The chain runs to 23 residues: Apolipophorin-3 (23 aa).

Belongs to the insect apolipophorin-3 family. Equilibrium between a soluble monomer and a bound lipoprotein form. Apolipophorin-3 associates with lipophorin during lipid loading until each particle contains 9 or 14 molecules of apolipophorin-3. In terms of tissue distribution, hemolymph.

It localises to the secreted. Assists in the loading of diacylglycerol, generated from triacylglycerol stores in the fat body through the action of adipokinetic hormone, into lipophorin, the hemolymph lipoprotein. It increases the lipid carrying capacity of lipophorin by covering the expanding hydrophobic surface resulting from diacylglycerol uptake. It thus plays a critical role in the transport of lipids during flight in several species of insects. The sequence is that of Apolipophorin-3 from Melanoplus sanguinipes (Migratory grasshopper).